The chain runs to 132 residues: uncharacterized protein (132 aa).

The first 25 residues, 1–25 (MRFTKVVGFLSVLGLAAVFPLTAQA), serve as a signal peptide directing secretion.

This is an uncharacterized protein from Bacillus subtilis (strain 168).